The primary structure comprises 294 residues: Protease HtpX homolog 2 (294 aa).

2 consecutive transmembrane segments (helical) span residues 15-35 (MLFT…FLSY) and 37-57 (GTPP…QYFY). Residue H140 coordinates Zn(2+). E141 is a catalytic residue. H144 lines the Zn(2+) pocket. Helical transmembrane passes span 151–171 (AVLT…RYSL) and 185–205 (GGIL…FLLI). A Zn(2+)-binding site is contributed by E213.

This sequence belongs to the peptidase M48B family. The cofactor is Zn(2+).

It localises to the cell membrane. The protein is Protease HtpX homolog 2 of Methanosarcina acetivorans (strain ATCC 35395 / DSM 2834 / JCM 12185 / C2A).